A 161-amino-acid chain; its full sequence is 4-hydroxybenzoyl-CoA reductase subunit gamma (161 aa).

Residues Asn-3–Leu-79 form the 2Fe-2S ferredoxin-type domain. Residues Cys-41, Cys-46, Cys-49, Cys-61, Cys-100, Cys-103, Cys-135, and Cys-137 each contribute to the [2Fe-2S] cluster site.

As to quaternary structure, heterohexamer of two alpha, two beta and two gamma subunits. The cofactor is [2Fe-2S] cluster.

The enzyme catalyses oxidized 2[4Fe-4S]-[ferredoxin] + benzoyl-CoA + H2O = 4-hydroxybenzoyl-CoA + reduced 2[4Fe-4S]-[ferredoxin] + 2 H(+). Its activity is regulated as follows. Inactivated by low concentrations of cyanide in vitro. In terms of biological role, component of a complex that catalyzes the reductive dehydroxylation of 4-hydroxybenzoyl-CoA to benzoyl-CoA. Reaction is not reversible. Is a key enzyme in the anaerobic degradation of phenolic compounds. The sequence is that of 4-hydroxybenzoyl-CoA reductase subunit gamma (hcrC) from Thauera aromatica.